A 36-amino-acid chain; its full sequence is Thrombin (36 aa).

The Peptidase S1 domain maps to 19-36 (IVKGIDAEVASAPMQVML).

The protein belongs to the peptidase S1 family. As to quaternary structure, forms a heterodimer with SERPINA5. Post-translationally, the gamma-carboxyglutamyl residues, which bind calcium ions, result from the carboxylation of glutamyl residues by a microsomal enzyme, the vitamin K-dependent carboxylase. The modified residues are necessary for the calcium-dependent interaction with a negatively charged phospholipid surface, which is essential for the conversion of prothrombin to thrombin. In terms of processing, N-glycosylated. In terms of tissue distribution, expressed by the liver and secreted in plasma.

The protein resides in the secreted. The enzyme catalyses Selective cleavage of Arg-|-Gly bonds in fibrinogen to form fibrin and release fibrinopeptides A and B.. Its activity is regulated as follows. Inhibited by SERPINA5. Its function is as follows. Thrombin, which cleaves bonds after Arg and Lys, converts fibrinogen to fibrin and activates factors V, VII, VIII, XIII, and, in complex with thrombomodulin, protein C. Functions in blood homeostasis, inflammation and wound healing. This is Thrombin from Salmo salar (Atlantic salmon).